Here is a 320-residue protein sequence, read N- to C-terminus: Putative HTH-type transcriptional regulatory protein VNG_2112C (320 aa).

An HTH cro/C1-type domain is found at 132–189 (LADRREDERLSLGQLASELGVSRRTVSKYEDGMNASIEVAMRLEDLFGGELTAPVDVM). Residues 143–162 (LGQLASELGVSRRTVSKYED) constitute a DNA-binding region (H-T-H motif).

This chain is Putative HTH-type transcriptional regulatory protein VNG_2112C, found in Halobacterium salinarum (strain ATCC 700922 / JCM 11081 / NRC-1) (Halobacterium halobium).